Here is a 64-residue protein sequence, read N- to C-terminus: Protein sigN173 (64 aa).

This chain is Protein sigN173, found in Dictyostelium discoideum (Social amoeba).